Here is a 135-residue protein sequence, read N- to C-terminus: DNA-directed RNA polymerase subunit omega (135 aa).

The disordered stretch occupies residues 107–135 (ASQESQDYEVDGEIDDEINDQDGDEEVSV). The segment covering 112 to 135 (QDYEVDGEIDDEINDQDGDEEVSV) has biased composition (acidic residues).

It belongs to the RNA polymerase subunit omega family. In terms of assembly, the RNAP catalytic core consists of 2 alpha, 1 beta, 1 beta' and 1 omega subunit. When a sigma factor is associated with the core the holoenzyme is formed, which can initiate transcription.

The catalysed reaction is RNA(n) + a ribonucleoside 5'-triphosphate = RNA(n+1) + diphosphate. Promotes RNA polymerase assembly. Latches the N- and C-terminal regions of the beta' subunit thereby facilitating its interaction with the beta and alpha subunits. This chain is DNA-directed RNA polymerase subunit omega, found in Wolbachia pipientis wMel.